We begin with the raw amino-acid sequence, 401 residues long: O-methyltransferase SAT18 (401 aa).

Asp-249 provides a ligand contact to S-adenosyl-L-methionine. Residue His-300 is the Proton acceptor of the active site.

The protein belongs to the class I-like SAM-binding methyltransferase superfamily. Cation-independent O-methyltransferase family.

The protein operates within mycotoxin biosynthesis. Its function is as follows. O-methyltransferase; part of the satratoxin SC3 cluster involved in the biosynthesis of satratoxins, trichothecene mycotoxins that are associated with human food poisonings. Satratoxins are suggested to be made by products of multiple gene clusters (SC1, SC2 and SC3) that encode 21 proteins in all, including polyketide synthases, acetyltransferases, and other enzymes expected to modify the trichothecene skeleton. SC1 encodes 10 proteins, SAT1 to SAT10. The largest are SAT8, which encodes a putative polyketide synthase (PKS) with a conventional non-reducing architecture, and SAT10, a putative protein containing four ankyrin repeats and thus may be involved in protein scaffolding. The putative short-chain reductase SAT3 may assist the PKS in some capacity. SAT6 contains a secretory lipase domain and acts probably as a trichothecene esterase. SAT5 encodes a putative acetyltransferase, and so, with SAT6, may affect endogenous protection from toxicity. The probable transcription factor SAT9 may regulate the expression of the SC1 cluster. SC2 encodes proteins SAT11 to SAT16, the largest of which encodes the putative reducing PKS SAT13. SAT11 is a cytochrome P450 monooxygenase, while SAT14 and SAT16 are probable acetyltransferases. The SC2 cluster may be regulated by the transcription factor SAT15. SC3 is a small cluster that encodes 5 proteins, SAT17 to SAT21. SAT21 is a putative MFS-type transporter which may have a role in exporting secondary metabolites. The four other proteins putatively encoded in SC3 include the taurine hydroxylase-like protein SAT17, the O-methyltransferase SAT18, the acetyltransferase SAT19, and the Cys6-type zinc finger SAT20, the latter being probably involved in regulation of SC3 expression. The protein is O-methyltransferase SAT18 of Stachybotrys chartarum (strain CBS 109288 / IBT 7711) (Toxic black mold).